Consider the following 180-residue polypeptide: Large ribosomal subunit protein uL5 (180 aa).

Belongs to the universal ribosomal protein uL5 family. As to quaternary structure, part of the 50S ribosomal subunit; part of the 5S rRNA/L5/L18/L25 subcomplex. Contacts the 5S rRNA and the P site tRNA. Forms a bridge to the 30S subunit in the 70S ribosome.

Functionally, this is one of the proteins that bind and probably mediate the attachment of the 5S RNA into the large ribosomal subunit, where it forms part of the central protuberance. In the 70S ribosome it contacts protein S13 of the 30S subunit (bridge B1b), connecting the 2 subunits; this bridge is implicated in subunit movement. Contacts the P site tRNA; the 5S rRNA and some of its associated proteins might help stabilize positioning of ribosome-bound tRNAs. The protein is Large ribosomal subunit protein uL5 of Chloroflexus aggregans (strain MD-66 / DSM 9485).